Consider the following 524-residue polypeptide: Keratin, type II cytoskeletal 71 (524 aa).

The segment at 1-130 (MNRQFTCKSG…DPEIQKVRAQ (130 aa)) is head. The interval 131-166 (EREQIKALNNKFASFIDKVRFLEQQNQVLETKWELL) is coil 1A. Positions 131-444 (EREQIKALNN…KLLESEECRM (314 aa)) constitute an IF rod domain. Residues 167-185 (QQLDLNNCKNNLEPILEGY) form a linker 1 region. Positions 186–277 (ISNLRKQLET…CLYEAEIAQI (92 aa)) are coil 1B. The segment at 278–301 (QSHISDMSVILSMDNNRDLNLDSI) is linker 12. The coil 2 stretch occupies residues 302-440 (IDEVRAQYEE…ATYRKLLESE (139 aa)). Residues 441 to 524 (ECRMSGEFPS…QSASSKKASR (84 aa)) are tail. Positions 491–524 (VRGGEGRSRGSTSDYKDTLGKGSSQSASSKKASR) are disordered. Positions 494-509 (GEGRSRGSTSDYKDTL) are enriched in basic and acidic residues. The span at 510–524 (GKGSSQSASSKKASR) shows a compositional bias: low complexity.

The protein belongs to the intermediate filament family. Heterodimer of a type I and a type II keratin. Associates with KRT16 and/or KRT17.

Its subcellular location is the cytoplasm. It localises to the cytoskeleton. Its function is as follows. Plays a central role in hair formation. Essential component of keratin intermediate filaments in the inner root sheath (IRS) of the hair follicle. This Felis catus (Cat) protein is Keratin, type II cytoskeletal 71 (KRT71).